A 286-amino-acid chain; its full sequence is Pyridoxal kinase PdxY (286 aa).

Substrate contacts are provided by residues Ser-9 and 44–45; that span reads TQ. ATP-binding residues include Asp-111, Glu-148, and Lys-181. Asp-222 is a substrate binding site.

Belongs to the pyridoxine kinase family. PdxY subfamily. In terms of assembly, homodimer. Mg(2+) serves as cofactor.

The catalysed reaction is pyridoxal + ATP = pyridoxal 5'-phosphate + ADP + H(+). Its pathway is cofactor metabolism; pyridoxal 5'-phosphate salvage; pyridoxal 5'-phosphate from pyridoxal: step 1/1. Its function is as follows. Pyridoxal kinase involved in the salvage pathway of pyridoxal 5'-phosphate (PLP). Catalyzes the phosphorylation of pyridoxal to PLP. The chain is Pyridoxal kinase PdxY from Actinobacillus pleuropneumoniae serotype 5b (strain L20).